The primary structure comprises 138 residues: Cell division protein SepF (138 aa).

Residues 1 to 59 are disordered; it reads MNNKFKDFFGFGDNDSYEERDAYEEHYDEQEEMQNSNRPTNSRDSNVVSIKAGQAGSGP. The span at 33–48 shows a compositional bias: polar residues; sequence MQNSNRPTNSRDSNVV.

Belongs to the SepF family. In terms of assembly, homodimer. Interacts with FtsZ.

It is found in the cytoplasm. In terms of biological role, cell division protein that is part of the divisome complex and is recruited early to the Z-ring. Probably stimulates Z-ring formation, perhaps through the cross-linking of FtsZ protofilaments. Its function overlaps with FtsA. This is Cell division protein SepF from Lactobacillus delbrueckii subsp. bulgaricus (strain ATCC 11842 / DSM 20081 / BCRC 10696 / JCM 1002 / NBRC 13953 / NCIMB 11778 / NCTC 12712 / WDCM 00102 / Lb 14).